Consider the following 303-residue polypeptide: MPEESSPRRTPQSIPYQDLPHLVNADGQYLFCRYWKPTGTPKALIFVSHGAGEHSGRYEELARMLMGLDLLVFAHDHVGHGQSEGERMVVSDFHVFVRDVLQHVDSMQKDYPGLPVFLLGHSMGGAIAILTAAERPGHFAGMVLISPLVLANPESATTFKVLAAKVLNLVLPNLSLGPIDSSVLSRNKTEVDIYNSDPLICRAGLKVCFGIQLLNAVSRVERALPKLTVPFLLLQGSADRLCDSKGAYLLMELAKSQDKTLKIYEGAYHVLHKELPEVTNSVFHEINMWVSQRTATAGTASPP.

Thr10 carries the post-translational modification Phosphothreonine. Tyr58 bears the 3'-nitrotyrosine mark. Ser122 functions as the Nucleophile in the catalytic mechanism. Residues Asp239 and His269 each act as charge relay system in the active site.

The protein belongs to the AB hydrolase superfamily. Monoacylglycerol lipase family. Homodimer. Detected in adipose tissue, lung, liver, kidney, brain and heart.

Its subcellular location is the cytoplasm. The protein localises to the cytosol. It is found in the membrane. It catalyses the reaction Hydrolyzes glycerol monoesters of long-chain fatty acids.. The catalysed reaction is a 1-acylglycerol + H2O = glycerol + a fatty acid + H(+). The enzyme catalyses a 2-acylglycerol + H2O = glycerol + a fatty acid + H(+). It carries out the reaction 1-octanoylglycerol + H2O = octanoate + glycerol + H(+). It catalyses the reaction 2-(5Z,8Z,11Z,14Z-eicosatetraenoyl)-glycerol + H2O = glycerol + (5Z,8Z,11Z,14Z)-eicosatetraenoate + H(+). The catalysed reaction is 1-decanoylglycerol + H2O = decanoate + glycerol + H(+). The enzyme catalyses 1-dodecanoylglycerol + H2O = dodecanoate + glycerol + H(+). It carries out the reaction 1-tetradecanoylglycerol + H2O = tetradecanoate + glycerol + H(+). It catalyses the reaction 2-hexadecanoylglycerol + H2O = glycerol + hexadecanoate + H(+). The catalysed reaction is 1-(9Z-octadecenoyl)-glycerol + H2O = glycerol + (9Z)-octadecenoate + H(+). The enzyme catalyses 2-(9Z-octadecenoyl)-glycerol + H2O = glycerol + (9Z)-octadecenoate + H(+). It carries out the reaction 2-(9Z,12Z-octadecadienoyl)-glycerol + H2O = (9Z,12Z)-octadecadienoate + glycerol + H(+). It catalyses the reaction 1-(5Z,8Z,11Z,14Z-eicosatetraenoyl)-glycerol + H2O = glycerol + (5Z,8Z,11Z,14Z)-eicosatetraenoate + H(+). The catalysed reaction is 1-(9Z,12Z-octadecadienoyl)-glycerol + H2O = (9Z,12Z)-octadecadienoate + glycerol + H(+). The enzyme catalyses 1-hexadecanoylglycerol + H2O = glycerol + hexadecanoate + H(+). It carries out the reaction 1-octadecanoylglycerol + H2O = octadecanoate + glycerol + H(+). It catalyses the reaction prostaglandin E2 1-glyceryl ester + H2O = prostaglandin E2 + glycerol + H(+). The catalysed reaction is prostaglandin D2-1-glycerol ester + H2O = prostaglandin D2 + glycerol + H(+). The enzyme catalyses 2-glyceryl-15-deoxy-Delta(12,14)-prostaglandin J2 + H2O = 15-deoxy-Delta(12,14)-prostaglandin J2 + glycerol + H(+). It carries out the reaction prostaglandin F2alpha 1-glyceryl ester + H2O = prostaglandin F2alpha + glycerol + H(+). It functions in the pathway glycerolipid metabolism; triacylglycerol degradation. Its function is as follows. Converts monoacylglycerides to free fatty acids and glycerol. Hydrolyzes the endocannabinoid 2-arachidonoylglycerol, and thereby contributes to the regulation of endocannabinoid signaling, nociperception and perception of pain. Regulates the levels of fatty acids that serve as signaling molecules and promote cancer cell migration, invasion and tumor growth. The sequence is that of Monoglyceride lipase from Homo sapiens (Human).